A 240-amino-acid chain; its full sequence is MGLEVAADSVGSALAAQDGGAIRVELCGGLDGGGLTPSFGTLAVVRERLQIPLYVLIRPRVGDFVFDAAEVEVMRRDVEQCVRLGCDGVVLGALDLQGQVDLPAMRALIEAAGTLGVTFHRAIDVSADPARVLEDAIALGCERVLTSGARASALEGVETIAALVRQAGERISIMPGAGVSAANVQALRAGTGAREFHASARGPVAAQVHAPHPYITDLGGDYQRTDVARVRSIVQLLQTA.

Belongs to the CutC family.

It localises to the cytoplasm. In Xanthomonas campestris pv. campestris (strain B100), this protein is PF03932 family protein CutC.